The chain runs to 1376 residues: YLP motif-containing protein 1 (1376 aa).

2 disordered regions span residues 1–335 (MYPN…PEED) and 511–1058 (STIP…PPGR). The segment covering 14 to 27 (YPPPPVPPPPPPVA) has biased composition (pro residues). Low complexity-rich tracts occupy residues 31 to 50 (ASPGPGYSSSTAPAAPSSSG) and 59 to 80 (LAQLQQLQQMHQKQMQCVLQPH). Composition is skewed to pro residues over residues 81–93 (HLPPPPLPPPPVM), 102–114 (QPPPPPMPPPPGP), 148–158 (PESPPVPPGSY), 166–176 (MPPPQPPPSYY), and 184–204 (YLPPAQPSPSKPQLPPPPPSI). Polar residues-rich tracts occupy residues 207–216 (GNKTTIQQEP) and 238–260 (STMTPQEQQQYWYRQHLLSLQQR). A compositionally biased stretch (basic residues) spans 261–271 (TKVHLPGHKKG). Positions 277-286 (DVPEPIKEEA) are enriched in basic and acidic residues. 4 stretches are compositionally biased toward pro residues: residues 303-320 (PPLPPPNEEMPPPLPPEE), 511-537 (STIPPPGMPPPVMPPSLPTSVPPPGMP), 545-594 (LPPP…PQGM), and 632-641 (PPSPYHPPPQ). A compositionally biased stretch (polar residues) spans 642-671 (SEQGNSKPLNKVFSSEQGLGESSSALSQSV). At K675 the chain carries N6-methyllysine. Residues 698 to 714 (RGPREQKEQLQKLKDFG) are compositionally biased toward basic and acidic residues. Composition is skewed to pro residues over residues 738-753 (MYPPPGSYRPPPPMGK), 773-796 (TRPPVPIPPPPPPPPPPPPPPPVI), and 840-870 (PVLPPPPVHPSIPPPGPMPMGMPPMSKPPPV). K886 is covalently cross-linked (Glycyl lysine isopeptide (Lys-Gly) (interchain with G-Cter in SUMO2)). Composition is skewed to basic and acidic residues over residues 896 to 930 (ITLRPDPLPERSAFDADHAGQRDRYDRDRDREPYF), 937 to 1004 (TDHR…DRPP), 1013 to 1023 (GERRTYPEERM), and 1039 to 1058 (RVEKKPESKNVDDILKPPGR). K943 participates in a covalent cross-link: Glycyl lysine isopeptide (Lys-Gly) (interchain with G-Cter in SUMO2). The involved in interaction with PPP1CA stretch occupies residues 1326–1333 (KKRVRWAD).

As to quaternary structure, interacts with PPP1CA and NCOA5. Forms a complex with ILF2, ILF3, KHDRBS1, RBMX, NCOA5 and PPP1CA. In terms of tissue distribution, high level expression seen in the brain, adipose tissue, heart and kidney, with a low level expression in muscle, spleen and lung (at protein level).

The protein resides in the nucleus. It is found in the nucleus speckle. Functionally, plays a role in the reduction of telomerase activity during differentiation of embryonic stem cells by binding to the core promoter of TERT and controlling its down-regulation. The chain is YLP motif-containing protein 1 (Ylpm1) from Rattus norvegicus (Rat).